Here is a 188-residue protein sequence, read N- to C-terminus: Ion-translocating oxidoreductase complex subunit G (188 aa).

The Cytoplasmic portion of the chain corresponds to 1–9 (MSDSKEITK). Residues 10 to 30 (VIVTMVVISAVAAALLALTYT) form a helical membrane-spanning segment. The Extracellular portion of the chain corresponds to 31 to 188 (PTQAQLKLLQ…AVDYVSAQEG (158 aa)). An FMN phosphoryl threonine modification is found at T166.

It belongs to the RnfG family. As to quaternary structure, the Rnf complex is probably composed of eight subunits, including RnfA, RnfB, RnfC, RnfD, RnfE and RnfG. It depends on FMN as a cofactor.

It localises to the cell membrane. Functionally, part of a membrane-bound complex that couples electron transfer with translocation of ions across the membrane. Catalyzes Na(+) transport, most probably coupled to electron transfer from reduced ferredoxin to methanophenazine and heterodisulfide reductase. Involved in heterodisulfide reduction during methanogenesis from acetate. This is Ion-translocating oxidoreductase complex subunit G from Methanosarcina acetivorans (strain ATCC 35395 / DSM 2834 / JCM 12185 / C2A).